The following is a 293-amino-acid chain: Tumor necrosis factor receptor type 1-associated DEATH domain protein (293 aa).

The Nuclear export signal signature appears at 156–171; sequence LRDDEVTQLEQQLQNS. One can recognise a Death domain in the interval 200–290; that stretch reads TPADQQRFAA…SMAEIMLGIQ (91 aa). Positions 216 to 229 match the Nuclear localization signal motif; it reads KRVGRALQKNCRAL.

As to quaternary structure, heterodimer with tnfrsf1a.

The protein localises to the nucleus. Its subcellular location is the cytoplasm. The protein resides in the cytoskeleton. In terms of biological role, adapter molecule for tnfrsf1a that specifically associates with the cytoplasmic domain of activated tnfrsf1a mediating its interaction with fadd. The protein is Tumor necrosis factor receptor type 1-associated DEATH domain protein of Danio rerio (Zebrafish).